Reading from the N-terminus, the 317-residue chain is Pseudouridine-5'-phosphate glycosidase 1 (317 aa).

Glutamate 40 acts as the Proton donor in catalysis. Positions 101 and 121 each coordinate substrate. Residue aspartate 153 coordinates Mn(2+). 155 to 157 (SAD) provides a ligand contact to substrate. Residue lysine 174 is the Nucleophile of the active site.

The protein belongs to the pseudouridine-5'-phosphate glycosidase family. Homotrimer. Mn(2+) is required as a cofactor.

It carries out the reaction D-ribose 5-phosphate + uracil = psi-UMP + H2O. Functionally, catalyzes the reversible cleavage of pseudouridine 5'-phosphate (PsiMP) to ribose 5-phosphate and uracil. Functions biologically in the cleavage direction, as part of a pseudouridine degradation pathway. The sequence is that of Pseudouridine-5'-phosphate glycosidase 1 from Rhizobium johnstonii (strain DSM 114642 / LMG 32736 / 3841) (Rhizobium leguminosarum bv. viciae).